Here is a 288-residue protein sequence, read N- to C-terminus: Small ribosomal subunit protein uS2 (288 aa).

Residues 259 to 276 (EAAPAAEEAPAAEAEAAA) are compositionally biased toward low complexity. Positions 259–288 (EAAPAAEEAPAAEAEAAATDTSSESDKTEA) are disordered.

Belongs to the universal ribosomal protein uS2 family.

The polypeptide is Small ribosomal subunit protein uS2 (Maricaulis maris (strain MCS10) (Caulobacter maris)).